The following is a 551-amino-acid chain: Protein PNS1 (551 aa).

Residues 1 to 72 are disordered; the sequence is MSAQEFYQGG…TGGQPVYQDT (72 aa). The Cytoplasmic segment spans residues 1–94; that stretch reads MSAQEFYQGG…RMNPRKRVND (94 aa). Positions 8–19 are enriched in low complexity; that stretch reads QGGNQRGYQQQQ. Over residues 45–63 the composition is skewed to polar residues; sequence PPNYNMKPSQPYASTNPET. The chain crosses the membrane as a helical span at residues 95–115; the sequence is IIPLILFIAAVVGFAVVSGIA. Residues 116–147 lie on the Extracellular side of the membrane; that stretch reads IHGFVQVNGLGGGMGDSSIGRTGSSITLDYHT. A helical transmembrane segment spans residues 148–168; sequence VYLLLVVVALGLVIASLYLAA. Over 169 to 177 the chain is Cytoplasmic; that stretch reads LRAFTKIIL. The helical transmembrane segment at 178 to 198 threads the bilayer; that stretch reads EVTLALTVILNIGICIYYFII. The Extracellular portion of the chain corresponds to 199–200; it reads QY. A helical membrane pass occupies residues 201-221; the sequence is WSGAIIFLIIALVSVFFYWGM. Over 222–244 the chain is Cytoplasmic; that stretch reads RKRIPLAKLLLQTTIDVTKHHPS. The helical transmembrane segment at 245 to 265 threads the bilayer; it reads VYVVVFIGLIIQAAVSVWYTF. Residues 266–307 are Extracellular-facing; it reads TCIAIYVKWTPGSAACSDGGCSSSKVAGLVFYATFSYLWLSQ. A helical membrane pass occupies residues 308-328; sequence VIGNVILCTLAGGVFGGWYYY. Residues 329 to 356 are Cytoplasmic-facing; the sequence is GPRTPGGGVPKRASLLAFVRASTLSLGS. The chain crosses the membrane as a helical span at residues 357–377; it reads IAFGSLLVTILELLRLILQLF. Residues 378–386 are Extracellular-facing; the sequence is RQYEAGQGD. Residues 387–407 traverse the membrane as a helical segment; that stretch reads MIGSILICIAQCCIGCIQWMV. The Cytoplasmic portion of the chain corresponds to 408-452; it reads EYFNKYAYIEIALYGKSYIPAAKDTWRLLKDRGIDALVNDSLVGT. A helical membrane pass occupies residues 453–473; sequence ALMWGAYINGFLCAVLGYFYL. At 474–488 the chain is on the extracellular side; it reads RFTHPAYNSDGQYSA. Residues 489-509 form a helical membrane-spanning segment; it reads PVILFSFLIGLNESFTVGSAI. Over 510-551 the chain is Cytoplasmic; that stretch reads DAGVSTIFVGLGEDPMVLAERSPGLFEMIRQVYPRVVQGVPH.

This sequence belongs to the CTL (choline transporter-like) family.

Its subcellular location is the cell membrane. Probably involved in transport through the plasma membrane. This Cryptococcus neoformans var. neoformans serotype D (strain B-3501A) (Filobasidiella neoformans) protein is Protein PNS1 (PNS1).